A 701-amino-acid chain; its full sequence is Nucleolar transcription factor 1-B (701 aa).

The tract at residues 1-21 (MNGAAGGDTQGKMTAPKDQDQ) is disordered. 5 consecutive DNA-binding regions (HMG box) follow at residues 112 to 180 (PKKP…AKFR), 196 to 264 (PEKP…REYM), 298 to 362 (TKPP…MRFL), 422 to 489 (PETP…SDMR), and 508 to 574 (KKAP…DTWM). Positions 382 to 426 (MKRKRTNTPASKMATEDAAKVKSRSGQADKKKAAEERAKLPETPK) are disordered. Over residues 408–426 (QADKKKAAEERAKLPETPK) the composition is skewed to basic and acidic residues. A disordered region spans residues 584–701 (AYKEQNTNKR…SADSSDSDSN (118 aa)). Positions 597–612 (TKIQAPSSKSKLVIQS) are enriched in polar residues. Positions 615 to 682 (DDDEDDEDDE…DNEEDDDDNE (68 aa)) are enriched in acidic residues. Positions 683–695 (SGSSSSSSSSADS) are enriched in low complexity.

In terms of assembly, XUBF consists of 2 polypeptides of 82 and 85 kDa, encoded by the same or closely related genes.

It is found in the nucleus. UBF recognizes the ribosomal RNA gene promotor and activates transcription mediated by RNA polymerase I through cooperative interactions with the species-specific factor SL1. It binds specifically to the upstream control element. This is Nucleolar transcription factor 1-B (ubtf-b) from Xenopus laevis (African clawed frog).